A 364-amino-acid polypeptide reads, in one-letter code: 3'(2'),5'-bisphosphate nucleotidase 1 (364 aa).

The active-site Proton acceptor is the Asp-54. The Mg(2+) site is built by Glu-77, Asp-141, Ile-143, and Asp-144. The active-site Proton acceptor is Thr-146. Adenosine 3',5'-bisphosphate contacts are provided by Thr-146, His-243, Ser-272, Lys-275, Arg-289, and Asp-302. AMP-binding residues include His-243, Ser-272, Lys-275, Arg-289, and Asp-302. Asp-302 is a binding site for Mg(2+).

The protein belongs to the inositol monophosphatase superfamily. Mg(2+) serves as cofactor.

The enzyme catalyses 3'-phosphoadenylyl sulfate + H2O = adenosine 5'-phosphosulfate + phosphate. It catalyses the reaction adenosine 3',5'-bisphosphate + H2O = AMP + phosphate. It carries out the reaction adenosine 2',5'-bisphosphate + H2O = AMP + phosphate. In terms of biological role, phosphatase that converts adenosine 3'-phosphate 5'-phosphosulfate (PAPS) to adenosine 5'-phosphosulfate (APS) and 3'(2')-phosphoadenosine 5'-phosphate (PAP) to AMP. Regulates the flux of sulfur in the sulfur-activation pathway by converting PAPS to APS. Involved in salt tolerance. The sequence is that of 3'(2'),5'-bisphosphate nucleotidase 1 (HAL21) from Candida albicans (strain SC5314 / ATCC MYA-2876) (Yeast).